The sequence spans 249 residues: DNA repair protein RecO (249 aa).

This sequence belongs to the RecO family.

Functionally, involved in DNA repair and RecF pathway recombination. The polypeptide is DNA repair protein RecO (Lactobacillus delbrueckii subsp. bulgaricus (strain ATCC 11842 / DSM 20081 / BCRC 10696 / JCM 1002 / NBRC 13953 / NCIMB 11778 / NCTC 12712 / WDCM 00102 / Lb 14)).